The chain runs to 199 residues: N-(5'-phosphoribosyl)anthranilate isomerase (199 aa).

This sequence belongs to the TrpF family.

The enzyme catalyses N-(5-phospho-beta-D-ribosyl)anthranilate = 1-(2-carboxyphenylamino)-1-deoxy-D-ribulose 5-phosphate. It functions in the pathway amino-acid biosynthesis; L-tryptophan biosynthesis; L-tryptophan from chorismate: step 3/5. The chain is N-(5'-phosphoribosyl)anthranilate isomerase from Campylobacter jejuni subsp. jejuni serotype O:2 (strain ATCC 700819 / NCTC 11168).